The primary structure comprises 395 residues: Elongation factor Tu (395 aa).

The tr-type G domain maps to 10–204 (KPHVNIGTIG…TVDSYIPEPK (195 aa)). The interval 19-26 (GHVDHGKT) is G1. 19–26 (GHVDHGKT) contributes to the GTP binding site. Thr-26 contacts Mg(2+). Residues 60–64 (GITIN) are G2. The tract at residues 81–84 (DAPG) is G3. GTP-binding positions include 81-85 (DAPGH) and 136-139 (NKTD). The tract at residues 136–139 (NKTD) is G4. The tract at residues 174–176 (SAL) is G5.

Belongs to the TRAFAC class translation factor GTPase superfamily. Classic translation factor GTPase family. EF-Tu/EF-1A subfamily. In terms of assembly, monomer.

The protein resides in the cytoplasm. It carries out the reaction GTP + H2O = GDP + phosphate + H(+). Functionally, GTP hydrolase that promotes the GTP-dependent binding of aminoacyl-tRNA to the A-site of ribosomes during protein biosynthesis. This is Elongation factor Tu from Leuconostoc citreum (strain KM20).